The primary structure comprises 1000 residues: Vacuolar protein-sorting protein bro1 (1000 aa).

In terms of domain architecture, BRO1 spans 5 to 406; the sequence is PMISCPLKQT…EKVETADGEM (402 aa). The stretch at 732–793 forms a coiled coil; it reads YAEMTETVDS…RQLMERLSTE (62 aa). 2 disordered regions span residues 760-857 and 891-1000; these read LLGQ…PYSQ and PIPA…NAWK. The segment covering 764 to 792 has biased composition (basic and acidic residues); it reads IEREKAAGTSDHEEREREKLRQLMERLST. The segment covering 840-849 has biased composition (polar residues); it reads VPQQHGTPVS. Pro residues-rich tracts occupy residues 898–922 and 931–954; these read SPPP…PPVP and YVPP…PFPS. Positions 981-991 are enriched in polar residues; that stretch reads TGPSVSANSSD.

Belongs to the BRO1 family.

It is found in the cytoplasm. The protein localises to the endosome. Its function is as follows. Involved in concentration and sorting of cargo proteins of the multivesicular body (MVB) for incorporation into intralumenal vesicles. The sequence is that of Vacuolar protein-sorting protein bro1 (broA) from Emericella nidulans (strain FGSC A4 / ATCC 38163 / CBS 112.46 / NRRL 194 / M139) (Aspergillus nidulans).